Consider the following 72-residue polypeptide: GDDVKSACCDTCLCTRSQPPTCRCVDVGERCHSACNHCVCNYSNPPQCQCFDTHKFCYKACHSSEKEEVIKN.

7 disulfides stabilise this stretch: cysteine 8–cysteine 61, cysteine 9–cysteine 24, cysteine 12–cysteine 57, cysteine 14–cysteine 22, cysteine 31–cysteine 38, cysteine 35–cysteine 50, and cysteine 40–cysteine 48.

The protein belongs to the Bowman-Birk serine protease inhibitor family.

Functionally, this inhibitor has two domains, each with separate antiprotease activity. 1 mole of inhibitor inhibits either 1 mole of trypsin or 2 moles of chymotrypsin, stoichiometrically. The sequence is that of Bowman-Birk type proteinase inhibitor from Vicia sativa subsp. nigra (Common vetch).